An 879-amino-acid chain; its full sequence is Oxysterol-binding protein-related protein 5 (879 aa).

Positions 1–73 (MKEEAFLRRR…TPSSATKVPP (73 aa)) are disordered. Ser-12 is subject to Phosphoserine. A coiled-coil region spans residues 93-123 (VTKKETLKAQKENYRQEKKRATRQLLSALTD). The 118-residue stretch at 126-243 (VVIMADSLKI…WLDALELALR (118 aa)) folds into the PH domain. Residues 254–341 (KPGRDGEPGT…TPGAPVRRGT (88 aa)) form a disordered region. Basic and acidic residues-rich tracts occupy residues 300–309 (FSDKSERENP) and 316–325 (TQDHSRKTES). Residues 384 to 389 (LSRVVL), 446 to 449 (KPYN), and 478 to 479 (HH) each bind a 1,2-diacyl-sn-glycero-3-phospho-(1D-myo-inositol 4-phosphate). Residues 384–389 (LSRVVL) and Asn-449 each bind a 1,2-diacyl-sn-glycero-3-phospho-L-serine. Residue Ser-504 coordinates a 1,2-diacyl-sn-glycero-3-phospho-L-serine. Residues Lys-670, Glu-674, and Arg-678 each coordinate a 1,2-diacyl-sn-glycero-3-phospho-(1D-myo-inositol 4-phosphate). The interval 742 to 806 (TTFLGSPGPR…FVPGGESPCP (65 aa)) is disordered. Ser-747 is subject to Phosphoserine. Residues 750–765 (PRHERSGPDQRLRKAS) are compositionally biased toward basic and acidic residues. A compositionally biased stretch (polar residues) spans 766–783 (DQPSGHSQATESSGSTPE). Residues 860–878 (SWFLLCVFLACQLFINHIL) form a helical membrane-spanning segment.

It belongs to the OSBP family. Ubiquitously expressed.

It localises to the endoplasmic reticulum membrane. In terms of biological role, lipid transporter involved in lipid countertransport between the endoplasmic reticulum and the plasma membrane: specifically exchanges phosphatidylserine with phosphatidylinositol 4-phosphate (PI4P), delivering phosphatidylserine to the plasma membrane in exchange for PI4P, which is degraded by the SAC1/SACM1L phosphatase in the endoplasmic reticulum. Binds phosphatidylserine and PI4P in a mutually exclusive manner. May cooperate with NPC1 to mediate the exit of cholesterol from endosomes/lysosomes. Binds 25-hydroxycholesterol and cholesterol. In Homo sapiens (Human), this protein is Oxysterol-binding protein-related protein 5 (OSBPL5).